The chain runs to 72 residues: Translation initiation factor IF-1 (72 aa).

The S1-like domain occupies 1–72 (MSKQDVIEFD…TKGRITYRGK (72 aa)).

This sequence belongs to the IF-1 family. As to quaternary structure, component of the 30S ribosomal translation pre-initiation complex which assembles on the 30S ribosome in the order IF-2 and IF-3, IF-1 and N-formylmethionyl-tRNA(fMet); mRNA recruitment can occur at any time during PIC assembly.

Its subcellular location is the cytoplasm. In terms of biological role, one of the essential components for the initiation of protein synthesis. Stabilizes the binding of IF-2 and IF-3 on the 30S subunit to which N-formylmethionyl-tRNA(fMet) subsequently binds. Helps modulate mRNA selection, yielding the 30S pre-initiation complex (PIC). Upon addition of the 50S ribosomal subunit IF-1, IF-2 and IF-3 are released leaving the mature 70S translation initiation complex. The polypeptide is Translation initiation factor IF-1 (Hydrogenovibrio crunogenus (strain DSM 25203 / XCL-2) (Thiomicrospira crunogena)).